The following is a 475-amino-acid chain: MAPQTETRAGAGFKAGVKDYRLTYYTPDYIVKDTDILAAFRMTPQPGVPPEECGAAVAAESSTGTWTTVWTDGLTSLDRYKGRCYDIEPVPGEENQYIAYVAYPLDLFEEGSVTNLFTSIVGNVFGFKALRALRLEDLRIPAAYAKTFQGPPHGIQVERDKLNKYGRGLLGCTIKPKLGLSAKNYGRAVYECLRGGLDFTKDDENVNSQPFMRWRDRFLFVAEAIYKAQSETGEIKGHYLNATAGTCEEMLKRAVCAKELGVPIIMHDYLTGGFTANTSLSNYCRDHGLLLHIHRAMHAVIDRQRNHGIHFRVLAKALRMSGGDHLHSGTVVGKLEGEREVTLGFVDLMRDDYIEKDRSRGIYFTQDWVSLPGVMPVASGGIHVWHMPALVEIFGDDACLQFGGGTLGHPWGNAPGAAANRVALEACTQARNEGRDLAREGGDVIRAACKWSPELAAACEVWKEIKFEFETIDKL.

A propeptide spanning residues 1–2 (MA) is cleaved from the precursor. Pro-3 is modified (N-acetylproline). Lys-14 carries the post-translational modification N6,N6,N6-trimethyllysine. Substrate contacts are provided by Asn-123 and Thr-173. Lys-175 functions as the Proton acceptor in the catalytic mechanism. Substrate is bound at residue Lys-177. Lys-201, Asp-203, and Glu-204 together coordinate Mg(2+). Lys-201 carries the N6-carboxylysine modification. The active-site Proton acceptor is His-294. Residues Arg-295, His-327, and Ser-379 each contribute to the substrate site.

This sequence belongs to the RuBisCO large chain family. Type I subfamily. Heterohexadecamer of 8 large chains and 8 small chains; disulfide-linked. The disulfide link is formed within the large subunit homodimers. Requires Mg(2+) as cofactor. In terms of processing, the disulfide bond which can form in the large chain dimeric partners within the hexadecamer appears to be associated with oxidative stress and protein turnover.

It localises to the plastid. Its subcellular location is the chloroplast. It carries out the reaction 2 (2R)-3-phosphoglycerate + 2 H(+) = D-ribulose 1,5-bisphosphate + CO2 + H2O. The enzyme catalyses D-ribulose 1,5-bisphosphate + O2 = 2-phosphoglycolate + (2R)-3-phosphoglycerate + 2 H(+). Its function is as follows. RuBisCO catalyzes two reactions: the carboxylation of D-ribulose 1,5-bisphosphate, the primary event in carbon dioxide fixation, as well as the oxidative fragmentation of the pentose substrate in the photorespiration process. Both reactions occur simultaneously and in competition at the same active site. This is Ribulose bisphosphate carboxylase large chain from Oedogonium cardiacum (Filamentous green alga).